We begin with the raw amino-acid sequence, 611 residues long: MGLRPLMVGALGVVYGDIGTSPLYTMKTALEWAGGADAETALGMLSLIVWTLLITTSIKYVAVVMRADNDGEGGILALMSLLGIKHGERLGVIAMGLIGAALLYGDGAITPAISVLSALEGLKSPLPQISPYIVTLSAIILVGLFALQAQGTDRIGKLFGPVMIAWFIVIGILGLFGILRHPSVLAALDPRHGLSYLFSHGMTGFLVLGAVFLCATGAEALYADMGHFGARPIRFAWYGLVLPCLILNYAGQTAVVVDAALGQEPNPFFALCPAALQLPLVALATVATIIASQAIISGAFSMTRQAIQLGLCPRLNIAQTSATGYGQIYIGFVNWTLMALTLGLTLGFRSSDNLAAAFGIAVSLTMLLTSILMFLTMREIWKWNLAASLLTAGLFVVVDMSFVSANLMKVLEGGWFPLVVAAVIFFLMMTWHQGRDLLVKKLERDTLPLATFIAQVGAKTRVPGTAVYMTSRLDVVPVPLLHNLKHNKVLHDRIVLLRVVTASTPRVAPDLRIDVEHVGSNFHTMTVRYGFMEQPDVPEALDQCRQRGLIFNMMETSFFVGRVKIVAERRSRFAAFQAHLFEIMHRNAMAATEFFRIPPNRVIELGGQVEI.

12 helical membrane-spanning segments follow: residues 6-26 (LMVGALGVVYGDIGTSPLYTM), 44-64 (MLSLIVWTLLITTSIKYVAVV), 90-110 (LGVIAMGLIGAALLYGDGAIT), 129-149 (ISPYIVTLSAIILVGLFALQA), 158-178 (LFGPVMIAWFIVIGILGLFGI), 193-213 (GLSYLFSHGMTGFLVLGAVFL), 237-257 (WYGLVLPCLILNYAGQTAVVV), 280-300 (LVALATVATIIASQAIISGAF), 328-348 (IYIGFVNWTLMALTLGLTLGF), 354-374 (LAAAFGIAVSLTMLLTSILMF), 385-405 (LAASLLTAGLFVVVDMSFVSA), and 410-430 (VLEGGWFPLVVAAVIFFLMMT).

The protein belongs to the HAK/KUP transporter (TC 2.A.72) family.

The protein localises to the cell inner membrane. It catalyses the reaction K(+)(in) + H(+)(in) = K(+)(out) + H(+)(out). Functionally, transport of potassium into the cell. Likely operates as a K(+):H(+) symporter. This chain is Probable potassium transport system protein Kup 1, found in Bradyrhizobium sp. (strain BTAi1 / ATCC BAA-1182).